We begin with the raw amino-acid sequence, 305 residues long: Alpha-N-acetylgalactosaminide alpha-2,6-sialyltransferase 3 (305 aa).

Residues 1–8 (MACILKRK) are Cytoplasmic-facing. The chain crosses the membrane as a helical; Signal-anchor for type II membrane protein span at residues 9-28 (SVIAVSFIAAFLFLLVVRLV). Topologically, residues 29-305 (NEVNFPLLLN…IFTHPNWTLS (277 aa)) are lumenal. A disulfide bridge connects residues Cys80 and Cys229. Asn148, Asn239, and Asn301 each carry an N-linked (GlcNAc...) asparagine glycan.

Belongs to the glycosyltransferase 29 family. Expressed in brain and kidney. Observed in the epithelium of the proximal tubules, marginal expression was also found in the distal tubules and collecting tubules.

It localises to the golgi apparatus membrane. It catalyses the reaction an alpha-Neu5Ac-(2-&gt;3)-beta-D-Gal-(1-&gt;3)-D-GlcNAc derivative + CMP-N-acetyl-beta-neuraminate = an alpha-Neu5Ac-(2-&gt;3)-beta-D-Gal-(1-&gt;3)-[alpha-Neu5Ac-(2-&gt;6)]-D-GlcNAc derivative + CMP + H(+). The catalysed reaction is a ganglioside GM1b (d18:1(4E)) + CMP-N-acetyl-beta-neuraminate = a ganglioside GD1alpha (d18:1(4E)) + CMP + H(+). The enzyme catalyses a globoside MSGG + CMP-N-acetyl-beta-neuraminate = a globoside DSGG + CMP + H(+). It carries out the reaction 3-O-[alpha-Neu5Ac-(2-&gt;3)-beta-D-Gal-(1-&gt;3)-alpha-D-GalNAc]-L-Ser-[protein] + CMP-N-acetyl-beta-neuraminate = a 3-O-{alpha-Neu5Ac-(2-&gt;3)-beta-D-Gal-(1-&gt;3)-[alpha-Neu5Ac-(2-&gt;6)]-alpha-D-GalNAc}-L-seryl-[protein] + CMP + H(+). It catalyses the reaction 3-O-[alpha-Neu5Ac-(2-&gt;3)-beta-D-Gal-(1-&gt;3)-alpha-D-GalNAc]-L-Thr-[protein] + CMP-N-acetyl-beta-neuraminate = a 3-O-{alpha-Neu5Ac-(2-&gt;3)-beta-D-Gal-(1-&gt;3)-[alpha-Neu5Ac-(2-&gt;6)]-alpha-D-GalNAc}-L-threonyl-[protein] + CMP + H(+). The protein operates within protein modification; protein glycosylation. Its pathway is glycolipid biosynthesis. Its function is as follows. Transfers the sialyl group (N-acetyl-alpha-neuraminyl or NeuAc) from CMP-NeuAc to the GalNAc residue on the NeuAc-alpha-2,3-Gal-beta-1,3-GalNAc sequence of glycoproteins and glycolipids forming an alpha-2,6-linkage. Produces branched type disialyl structures by transfer of a sialyl group onto a GalNAc residue inside the backbone core chains. ST6GalNAcIII prefers glycolipids to glycoproteins, predominantly catalyzing the biosynthesis of ganglioside GD1alpha from GM1b. GD1alpha is a critical molecule in the communication and interaction between neuronal cells and their supportive cells, particularly in brain tissues, and functions as an adhesion molecule in the process of metastasis. Sialylation of glycoproteins or glycosphingolipids is very important in tumor development, neuronal development, nerve repair, immunological processes and regulation of hormone sensitivity. The sequence is that of Alpha-N-acetylgalactosaminide alpha-2,6-sialyltransferase 3 (ST6GALNAC3) from Homo sapiens (Human).